We begin with the raw amino-acid sequence, 70 residues long: Myotoxin (70 aa).

Positions 1-22 (MKILYLLFAFLFLAFLSEPGNA) are cleaved as a signal peptide. Cystine bridges form between Cys26–Cys58, Cys33–Cys52, and Cys40–Cys59.

This sequence belongs to the crotamine-myotoxin family. As to quaternary structure, monomer. Expressed by the venom gland.

It localises to the secreted. In terms of biological role, cationic peptide that possesses multiple functions. It acts as a cell-penetrating peptide (CPP), and as a potent voltage-gated potassium channel (Kv) inhibitor. It exhibits antimicrobial activities, hind limb paralysis, and severe muscle necrosis by a non-enzymatic mechanism. The chain is Myotoxin from Crotalus helleri (Southern pacific rattlesnake).